The following is a 470-amino-acid chain: Heparan-sulfate 6-O-sulfotransferase 3 (470 aa).

The Cytoplasmic portion of the chain corresponds to 1-4 (MDER). A helical; Signal-anchor for type II membrane protein transmembrane segment spans residues 5–27 (FNKWLLTPVLTLLFVVIMYQYVS). Residues 28 to 470 (PSCTSSCTNF…EDYNSQVVRW (443 aa)) lie on the Lumenal side of the membrane. The disordered stretch occupies residues 36–121 (NFGEQLRSGE…EAPENGSLPR (86 aa)). A compositionally biased stretch (acidic residues) spans 88-113 (PEDEDEDPGDPEEEEEEEEEEPDPEA). 2 N-linked (GlcNAc...) asparagine glycosylation sites follow: asparagine 116 and asparagine 127. 151–159 (HIQKTGGTT) contributes to the 3'-phosphoadenylyl sulfate binding site. Residues 181-182 (KK), arginine 198, tryptophan 203, and histidine 208 contribute to the substrate site. Catalysis depends on histidine 208, which acts as the Proton acceptor. Residue asparagine 230 is glycosylated (N-linked (GlcNAc...) asparagine). Residues arginine 244 and serine 252 each coordinate 3'-phosphoadenylyl sulfate. Substrate contacts are provided by histidine 256 and tryptophan 263. Residues asparagine 323 and asparagine 328 are each glycosylated (N-linked (GlcNAc...) asparagine). 376-378 (TQF) is a binding site for 3'-phosphoadenylyl sulfate. An N-linked (GlcNAc...) asparagine glycan is attached at asparagine 379. 382–383 (RA) contacts 3'-phosphoadenylyl sulfate. The tract at residues 421 to 453 (TKQLEHQRDRQKRREERRLQREHRAHRWPKEDR) is disordered. The span at 422-439 (KQLEHQRDRQKRREERRL) shows a compositional bias: basic and acidic residues.

This sequence belongs to the sulfotransferase 6 family. Ubiquitously expressed.

The protein resides in the membrane. The enzyme catalyses alpha-D-glucosaminyl-[heparan sulfate](n) + 3'-phosphoadenylyl sulfate = 6-sulfo-alpha-D-glucosaminyl-[heparan sulfate](n) + adenosine 3',5'-bisphosphate + H(+). Functionally, 6-O-sulfation enzyme which catalyzes the transfer of sulfate from 3'-phosphoadenosine 5'-phosphosulfate (PAPS) to position 6 of the N-sulfoglucosamine residue (GlcNS) of heparan sulfate. The chain is Heparan-sulfate 6-O-sulfotransferase 3 (Hs6st3) from Mus musculus (Mouse).